The chain runs to 122 residues: Large ribosomal subunit protein uL22 (122 aa).

A disordered region spans residues 102–122 (VAEGKEMKSSKSHKKNQAEGK).

This sequence belongs to the universal ribosomal protein uL22 family. Part of the 50S ribosomal subunit.

Functionally, this protein binds specifically to 23S rRNA; its binding is stimulated by other ribosomal proteins, e.g. L4, L17, and L20. It is important during the early stages of 50S assembly. It makes multiple contacts with different domains of the 23S rRNA in the assembled 50S subunit and ribosome. The globular domain of the protein is located near the polypeptide exit tunnel on the outside of the subunit, while an extended beta-hairpin is found that lines the wall of the exit tunnel in the center of the 70S ribosome. The chain is Large ribosomal subunit protein uL22 from Helicobacter pylori (strain ATCC 700392 / 26695) (Campylobacter pylori).